Consider the following 526-residue polypeptide: ATP synthase subunit alpha (526 aa).

171-178 (GDRQTGKT) is an ATP binding site.

This sequence belongs to the ATPase alpha/beta chains family. As to quaternary structure, F-type ATPases have 2 components, CF(1) - the catalytic core - and CF(0) - the membrane proton channel. CF(1) has five subunits: alpha(3), beta(3), gamma(1), delta(1), epsilon(1). CF(0) has four main subunits: a, b, b' and c.

The protein resides in the cell inner membrane. The catalysed reaction is ATP + H2O + 4 H(+)(in) = ADP + phosphate + 5 H(+)(out). Its function is as follows. Produces ATP from ADP in the presence of a proton gradient across the membrane. The alpha chain is a regulatory subunit. In Chlorobium limicola (strain DSM 245 / NBRC 103803 / 6330), this protein is ATP synthase subunit alpha.